A 671-amino-acid polypeptide reads, in one-letter code: DNA polymerase kappa (671 aa).

One can recognise a UmuC domain in the interval 105-285; that stretch reads WLHVDMDAFY…LPVRKIGGIG (181 aa). Positions 109 and 200 each coordinate Mg(2+). Residue Glu-201 is part of the active site. The segment at 576–613 adopts a UBZ3-type zinc-finger fold; it reads YWIDGYKCVLCGIELPPSFVEERQEHSDFHLAQRLQNE. Residues Cys-583, Cys-586, His-601, and His-605 each coordinate Zn(2+). The interval 607–671 is disordered; it reads AQRLQNEETG…NQNSNETQRK (65 aa). The Nuclear localization signal signature appears at 625–632; sequence KRRILGKE. Positions 629 to 650 are enriched in basic and acidic residues; the sequence is LGKEKVNSKPKKQKPDQKDSSK. Residues 659 to 671 are compositionally biased toward polar residues; the sequence is TKSNQNSNETQRK.

Belongs to the DNA polymerase type-Y family. The cofactor is Mg(2+). As to expression, expressed in roots, leaves, stems, flowers and siliques. Present in endoreduplicating cells.

The protein localises to the nucleus. It carries out the reaction DNA(n) + a 2'-deoxyribonucleoside 5'-triphosphate = DNA(n+1) + diphosphate. Unable to bypass a single 1,N(6)-ethenoadenine (epsilon-dA) or an abasic site lesions in DNA templates. In terms of biological role, template-directed low-fidelity DNA polymerase specifically involved in DNA repair. Able to extend primer-terminal mispairs, and to insert nucleotides opposite to a single 7,8-dihydro-8-oxoGuanine (8-oxoG) lesion and moderately extend from the resulting primer end, thus leading to both error-free and error-prone bypass of 8-oxoG DNA lesions. Probably involved in consecutive DNA replication cycles in the absence of mitosis. Binds preferentially template-primer DNA substrates or single-stranded DNA. Plays an important role in translesion synthesis, where the normal high-fidelity DNA polymerases cannot proceed and DNA synthesis stalls. Depending on the context, it inserts the correct base, but causes frequent base transitions, transversions and frameshifts. This is DNA polymerase kappa from Arabidopsis thaliana (Mouse-ear cress).